A 388-amino-acid chain; its full sequence is Mannitol-1-phosphate 5-dehydrogenase (388 aa).

Alanine 5–glycine 16 lines the NAD(+) pocket. The active site involves lysine 213.

It belongs to the mannitol dehydrogenase family. Monomer.

The catalysed reaction is D-mannitol 1-phosphate + NAD(+) = beta-D-fructose 6-phosphate + NADH + H(+). Functionally, catalyzes the NAD(H)-dependent interconversion of D-fructose 6-phosphate and D-mannitol 1-phosphate in the mannitol metabolic pathway. In Neosartorya fischeri (strain ATCC 1020 / DSM 3700 / CBS 544.65 / FGSC A1164 / JCM 1740 / NRRL 181 / WB 181) (Aspergillus fischerianus), this protein is Mannitol-1-phosphate 5-dehydrogenase (mpdA).